The chain runs to 353 residues: Holliday junction branch migration complex subunit RuvB (353 aa).

Positions 4–185 (ADRLITAVGG…FGIVQRLEFY (182 aa)) are large ATPase domain (RuvB-L). Residues I24, R25, G66, K69, T70, T71, 132–134 (EDF), R175, Y185, and R222 each bind ATP. T70 lines the Mg(2+) pocket. The segment at 186-256 (NIADLSTIVA…TADKALNLLD (71 aa)) is small ATPAse domain (RuvB-S). The tract at residues 259–353 (EHGFDHQDRR…GEFVDDAADL (95 aa)) is head domain (RuvB-H). The DNA site is built by R295, R314, and R319.

The protein belongs to the RuvB family. As to quaternary structure, homohexamer. Forms an RuvA(8)-RuvB(12)-Holliday junction (HJ) complex. HJ DNA is sandwiched between 2 RuvA tetramers; dsDNA enters through RuvA and exits via RuvB. An RuvB hexamer assembles on each DNA strand where it exits the tetramer. Each RuvB hexamer is contacted by two RuvA subunits (via domain III) on 2 adjacent RuvB subunits; this complex drives branch migration. In the full resolvosome a probable DNA-RuvA(4)-RuvB(12)-RuvC(2) complex forms which resolves the HJ.

It is found in the cytoplasm. It catalyses the reaction ATP + H2O = ADP + phosphate + H(+). The RuvA-RuvB-RuvC complex processes Holliday junction (HJ) DNA during genetic recombination and DNA repair, while the RuvA-RuvB complex plays an important role in the rescue of blocked DNA replication forks via replication fork reversal (RFR). RuvA specifically binds to HJ cruciform DNA, conferring on it an open structure. The RuvB hexamer acts as an ATP-dependent pump, pulling dsDNA into and through the RuvAB complex. RuvB forms 2 homohexamers on either side of HJ DNA bound by 1 or 2 RuvA tetramers; 4 subunits per hexamer contact DNA at a time. Coordinated motions by a converter formed by DNA-disengaged RuvB subunits stimulates ATP hydrolysis and nucleotide exchange. Immobilization of the converter enables RuvB to convert the ATP-contained energy into a lever motion, pulling 2 nucleotides of DNA out of the RuvA tetramer per ATP hydrolyzed, thus driving DNA branch migration. The RuvB motors rotate together with the DNA substrate, which together with the progressing nucleotide cycle form the mechanistic basis for DNA recombination by continuous HJ branch migration. Branch migration allows RuvC to scan DNA until it finds its consensus sequence, where it cleaves and resolves cruciform DNA. The chain is Holliday junction branch migration complex subunit RuvB from Pseudomonas syringae pv. tomato (strain ATCC BAA-871 / DC3000).